The primary structure comprises 142 residues: Nucleoside diphosphate kinase (142 aa).

ATP-binding residues include Lys-11, Phe-59, Arg-87, Thr-93, Arg-104, and Asn-114. The active-site Pros-phosphohistidine intermediate is the His-117.

It belongs to the NDK family. In terms of assembly, homotetramer. Requires Mg(2+) as cofactor.

The protein resides in the cytoplasm. The catalysed reaction is a 2'-deoxyribonucleoside 5'-diphosphate + ATP = a 2'-deoxyribonucleoside 5'-triphosphate + ADP. The enzyme catalyses a ribonucleoside 5'-diphosphate + ATP = a ribonucleoside 5'-triphosphate + ADP. Functionally, major role in the synthesis of nucleoside triphosphates other than ATP. The ATP gamma phosphate is transferred to the NDP beta phosphate via a ping-pong mechanism, using a phosphorylated active-site intermediate. The protein is Nucleoside diphosphate kinase of Aeromonas hydrophila subsp. hydrophila (strain ATCC 7966 / DSM 30187 / BCRC 13018 / CCUG 14551 / JCM 1027 / KCTC 2358 / NCIMB 9240 / NCTC 8049).